The following is a 529-amino-acid chain: Glucose transporter 2A (529 aa).

The interval 1–22 (MTERRDNVSHAPDAIEGPNDGA) is disordered. The Cytoplasmic segment spans residues 1–43 (MTERRDNVSHAPDAIEGPNDGAHAEDTSPGFFSFENLGVAQVQ). Residues 44–64 (VVGGTLNGFSIGFVAVYILLY) traverse the membrane as a helical segment. Residues 65-119 (EVATNCSLFKTTEACKAVGSYGCEWKDTEVCSWKKECDSDSDGVNPCESLIGYSS) are Extracellular-facing. The helical transmembrane segment at 120-140 (LYSGIFASAMIVGSMVGSIIA) threads the bilayer. At 141 to 152 (GKCITMFGLKKS) the chain is on the cytoplasmic side. A helical transmembrane segment spans residues 153–173 (FIIVGVMSVVASALNHISVAT). Residues 174-175 (NE) lie on the Extracellular side of the membrane. A helical transmembrane segment spans residues 176 to 196 (FWVLCAGRVLMGIGLGVVCVI). At 197–214 (CPMYVNENAHPKLSKVDG) the chain is on the cytoplasmic side. Residues 215–235 (VLFQVFITFGIMLAAMLGLIL) traverse the membrane as a helical segment. Residues 236–250 (DKTVNYDNDPDMAGR) lie on the Extracellular side of the membrane. Residues 251 to 271 (FHGFCAVSSVLSVAMFLVGMF) traverse the membrane as a helical segment. The Cytoplasmic portion of the chain corresponds to 272-300 (LRESTATFSQDDDGKADGGMDPNEYGWGQ). The helical transmembrane segment at 301-321 (MLWPLFMGAVTAGTLQLTGIN) threads the bilayer. The Extracellular portion of the chain corresponds to 322 to 339 (AVMNYAPKITENLGMDPS). A helical membrane pass occupies residues 340–360 (LGNFLVMAWNFVTSLVAIPLA). Over 361 to 368 (SRFTMRQM) the chain is Cytoplasmic. A helical transmembrane segment spans residues 369-389 (FITCSFVASCMCLFLCGIPVF). The Extracellular portion of the chain corresponds to 390 to 404 (PGVAEEKVKNGVATT). The chain crosses the membrane as a helical span at residues 405–425 (GIALFIAAFEFGVGSCFFVLA). The Cytoplasmic segment spans residues 426–439 (QDLFPPSFRPKGSS). A helical transmembrane segment spans residues 440-460 (FVVMMQFIFNILINLLYPITT). At 461 to 476 (EAISGGATGDQDKGQA) the chain is on the extracellular side. Residues 477–497 (VVFILFGLIGLICFVLQFFYL) traverse the membrane as a helical segment. Topologically, residues 498–529 (YPYDANQDHENDHGTEPVERILSPVDVPTPRN) are cytoplasmic. Positions 508–529 (NDHGTEPVERILSPVDVPTPRN) are disordered.

The protein belongs to the major facilitator superfamily. Sugar transporter (TC 2.A.1.1) family.

The protein resides in the membrane. Facilitative glucose transporter. The polypeptide is Glucose transporter 2A (THT2A) (Trypanosoma brucei brucei).